Reading from the N-terminus, the 661-residue chain is Threonine--tRNA ligase (661 aa).

Residues 1-64 form the TGS domain; the sequence is MSHSVSLTFP…ADGKIEIVTR (64 aa). Positions 245-547 are catalytic; the sequence is DHRRLGREMD…LLENYAGHMP (303 aa). Cysteine 341, histidine 392, and histidine 524 together coordinate Zn(2+).

Belongs to the class-II aminoacyl-tRNA synthetase family. In terms of assembly, homodimer. Zn(2+) is required as a cofactor.

It is found in the cytoplasm. It catalyses the reaction tRNA(Thr) + L-threonine + ATP = L-threonyl-tRNA(Thr) + AMP + diphosphate + H(+). Its function is as follows. Catalyzes the attachment of threonine to tRNA(Thr) in a two-step reaction: L-threonine is first activated by ATP to form Thr-AMP and then transferred to the acceptor end of tRNA(Thr). Also edits incorrectly charged L-seryl-tRNA(Thr). This chain is Threonine--tRNA ligase, found in Sinorhizobium fredii (strain NBRC 101917 / NGR234).